Consider the following 385-residue polypeptide: MKLHEYQGKEILRQFGVNVQDGKVARTPDEVRQIAREYGQPVVVKAQVHVGGRGKAGGVKFSPTEDKAFENGEKILGMDIKGLTVNKVLVTKAVDIDAGTEYYVGMIVDRNVQSFTLMASAEGGMEIEEVAAATPEKIIKHRVDPVTGLRPYEAREVAIRAGFKGNLNKIADMMVKMSEAALKRDAVLVEINPLFVGPDGVPLALDTKFEIDDNAMYRHQDLADWRELEAEHPLEIEASKYGFAYVKLDGNVGVLGNGAGIVMTSLDVVNRAGAKPANFLDIGGGAKAEVVYNAVKLVSKDSDVKAIFINIFGGITRADEVAKGVIQALKDGILTKPVRMRIAGTAEDEAKALLAEVNSPLIQMYPTMFEAADEAAKEANAAEAK.

Positions 9-237 constitute an ATP-grasp domain; sequence KEILRQFGVN…LEAEHPLEIE (229 aa). Residues lysine 45, 52–54, valine 94, and glutamate 101 each bind ATP; that span reads GRG. Mg(2+) is bound by residues asparagine 192 and aspartate 206. Substrate is bound by residues asparagine 257 and 314–316; that span reads GIT.

This sequence belongs to the succinate/malate CoA ligase beta subunit family. In terms of assembly, heterotetramer of two alpha and two beta subunits. Requires Mg(2+) as cofactor.

The enzyme catalyses succinate + ATP + CoA = succinyl-CoA + ADP + phosphate. It carries out the reaction GTP + succinate + CoA = succinyl-CoA + GDP + phosphate. It functions in the pathway carbohydrate metabolism; tricarboxylic acid cycle; succinate from succinyl-CoA (ligase route): step 1/1. Succinyl-CoA synthetase functions in the citric acid cycle (TCA), coupling the hydrolysis of succinyl-CoA to the synthesis of either ATP or GTP and thus represents the only step of substrate-level phosphorylation in the TCA. The beta subunit provides nucleotide specificity of the enzyme and binds the substrate succinate, while the binding sites for coenzyme A and phosphate are found in the alpha subunit. The chain is Succinate--CoA ligase [ADP-forming] subunit beta from Deinococcus deserti (strain DSM 17065 / CIP 109153 / LMG 22923 / VCD115).